The following is a 187-amino-acid chain: Elongation factor P (187 aa).

Lysine 33 carries the post-translational modification N6-(3,6-diaminohexanoyl)-5-hydroxylysine.

It belongs to the elongation factor P family. In terms of processing, may be beta-lysylated on the epsilon-amino group of Lys-33 by the combined action of EpmA and EpmB, and then hydroxylated on the C5 position of the same residue by EpmC (if this protein is present). Lysylation is critical for the stimulatory effect of EF-P on peptide-bond formation. The lysylation moiety may extend toward the peptidyltransferase center and stabilize the terminal 3-CCA end of the tRNA. Hydroxylation of the C5 position on Lys-33 may allow additional potential stabilizing hydrogen-bond interactions with the P-tRNA.

It is found in the cytoplasm. It participates in protein biosynthesis; polypeptide chain elongation. Functionally, involved in peptide bond synthesis. Alleviates ribosome stalling that occurs when 3 or more consecutive Pro residues or the sequence PPG is present in a protein, possibly by augmenting the peptidyl transferase activity of the ribosome. Modification of Lys-33 is required for alleviation. The protein is Elongation factor P of Blochmanniella floridana.